Here is a 160-residue protein sequence, read N- to C-terminus: MAEKKNILTYEGLKQLEDELQDLKVNKRKEVSQKIKEAREQGDLSENAEYDAAKDEQRDIEARIEEIDKILKNAEVVVEDEVDVDTVNIGCLVRILDMEFNDELEYKIVGSTEANSLKGKISNESPVGKALIGARKDDVIEIEINGNSFKYKVLEIQKSN.

Residues Ala-2–Glu-81 adopt a coiled-coil conformation. The disordered stretch occupies residues Lys-36–Asp-55.

The protein belongs to the GreA/GreB family.

Functionally, necessary for efficient RNA polymerase transcription elongation past template-encoded arresting sites. The arresting sites in DNA have the property of trapping a certain fraction of elongating RNA polymerases that pass through, resulting in locked ternary complexes. Cleavage of the nascent transcript by cleavage factors such as GreA or GreB allows the resumption of elongation from the new 3'terminus. GreA releases sequences of 2 to 3 nucleotides. The sequence is that of Transcription elongation factor GreA from Lachnoclostridium phytofermentans (strain ATCC 700394 / DSM 18823 / ISDg) (Clostridium phytofermentans).